A 262-amino-acid chain; its full sequence is Taurine import ATP-binding protein TauB (262 aa).

Positions 4–233 constitute an ABC transporter domain; sequence LELERISAQY…RYAAGESARA (230 aa). Residue 38 to 45 participates in ATP binding; the sequence is GPSGSGKT.

Belongs to the ABC transporter superfamily. Taurine importer (TC 3.A.1.17.1) family. The complex is composed of two ATP-binding proteins (TauB), two transmembrane proteins (TauC) and a solute-binding protein (TauA).

It is found in the cell inner membrane. The catalysed reaction is taurine(out) + ATP + H2O = taurine(in) + ADP + phosphate + H(+). Functionally, part of the ABC transporter complex TauABC involved in taurine import. Responsible for energy coupling to the transport system. This chain is Taurine import ATP-binding protein TauB, found in Pseudomonas putida (strain ATCC 47054 / DSM 6125 / CFBP 8728 / NCIMB 11950 / KT2440).